We begin with the raw amino-acid sequence, 28 residues long: Basic phospholipase A2 homolog BmatTX-II (28 aa).

In terms of assembly, monomer. Expressed by the venom gland.

It localises to the secreted. Its function is as follows. Snake venom phospholipase A2 homolog that lacks enzymatic activity. Shows high myotoxic activity, neutrophil activation (demonstrated by activation induction of IL-1beta production), and slight cytotoxicity against Jurkat (leukemia T) and SK-BR-3 (breast adenocarcinoma) tumor cell lines. A model of myotoxic mechanism has been proposed: an apo Lys49-PLA2 is activated by the entrance of a hydrophobic molecule (e.g. fatty acid) at the hydrophobic channel of the protein leading to a reorientation of a monomer. This reorientation causes a transition between 'inactive' to 'active' states, causing alignment of C-terminal and membrane-docking sites (MDoS) side-by-side and putting the membrane-disruption sites (MDiS) in the same plane, exposed to solvent and in a symmetric position for both monomers. The MDoS region stabilizes the toxin on membrane by the interaction of charged residues with phospholipid head groups. Subsequently, the MDiS region destabilizes the membrane with penetration of hydrophobic residues. This insertion causes a disorganization of the membrane, allowing an uncontrolled influx of ions (i.e. calcium and sodium), and eventually triggering irreversible intracellular alterations and cell death. The chain is Basic phospholipase A2 homolog BmatTX-II from Bothrops mattogrossensis (Pitviper).